Here is a 412-residue protein sequence, read N- to C-terminus: Glutamate-1-semialdehyde 2,1-aminomutase (412 aa).

An N6-(pyridoxal phosphate)lysine modification is found at Lys-260.

Belongs to the class-III pyridoxal-phosphate-dependent aminotransferase family. HemL subfamily. Pyridoxal 5'-phosphate serves as cofactor.

The protein resides in the cytoplasm. The enzyme catalyses (S)-4-amino-5-oxopentanoate = 5-aminolevulinate. Its pathway is porphyrin-containing compound metabolism; protoporphyrin-IX biosynthesis; 5-aminolevulinate from L-glutamyl-tRNA(Glu): step 2/2. The chain is Glutamate-1-semialdehyde 2,1-aminomutase from Methanocorpusculum labreanum (strain ATCC 43576 / DSM 4855 / Z).